Here is a 295-residue protein sequence, read N- to C-terminus: UDP-N-acetylenolpyruvoylglucosamine reductase (295 aa).

The FAD-binding PCMH-type domain maps to 24-188; sequence KVGGNAEIFF…LKAIFKANKG (165 aa). Arg-168 is an active-site residue. Catalysis depends on Ser-217, which acts as the Proton donor. Glu-287 is an active-site residue.

Belongs to the MurB family. It depends on FAD as a cofactor.

The protein localises to the cytoplasm. The catalysed reaction is UDP-N-acetyl-alpha-D-muramate + NADP(+) = UDP-N-acetyl-3-O-(1-carboxyvinyl)-alpha-D-glucosamine + NADPH + H(+). Its pathway is cell wall biogenesis; peptidoglycan biosynthesis. Functionally, cell wall formation. The sequence is that of UDP-N-acetylenolpyruvoylglucosamine reductase from Rickettsia typhi (strain ATCC VR-144 / Wilmington).